Here is a 1138-residue protein sequence, read N- to C-terminus: Lysylphosphatidylglycerol biosynthesis bifunctional protein LysX (1138 aa).

Positions 1–15 (MALDTPSSDLPVSTD) are enriched in polar residues. The tract at residues 1-34 (MALDTPSSDLPVSTDDTAEHQPTPAHRPPSAADR) is disordered. The phosphatidylglycerol lysyltransferase stretch occupies residues 1-646 (MALDTPSSDL…LIAQLESEED (646 aa)). A run of 6 helical transmembrane segments spans residues 56 to 76 (IAGT…IFPL), 92 to 112 (IVSL…VAIA), 119 to 139 (IAWW…ALLL), 155 to 175 (IQIW…IVTY), 190 to 210 (ALGV…GLVW), and 247 to 267 (IVID…AATV). The interval 647–1138 (RTAVEVHRPE…AFPMVKPTDA (492 aa)) is lysine--tRNA ligase. The segment at residues 698-772 (VTIAGRVTKM…GELSVLIDAW (75 aa)) is a DNA-binding region (OB). 2 residues coordinate Mg(2+): D1048 and E1055.

This sequence in the N-terminal section; belongs to the LPG synthetase family. In the C-terminal section; belongs to the class-II aminoacyl-tRNA synthetase family. Mg(2+) serves as cofactor.

The protein resides in the cell membrane. The catalysed reaction is tRNA(Lys) + L-lysine + ATP = L-lysyl-tRNA(Lys) + AMP + diphosphate. It carries out the reaction L-lysyl-tRNA(Lys) + a 1,2-diacyl-sn-glycero-3-phospho-(1'-sn-glycerol) = a 1,2-diacyl-sn-glycero-3-phospho-1'-(3'-O-L-lysyl)-sn-glycerol + tRNA(Lys). Functionally, catalyzes the production of L-lysyl-tRNA(Lys)transfer and the transfer of a lysyl group from L-lysyl-tRNA(Lys) to membrane-bound phosphatidylglycerol (PG), which produces lysylphosphatidylglycerol (LPG), one of the components of the bacterial membrane with a positive net charge. LPG synthesis contributes to the resistance to cationic antimicrobial peptides (CAMPs) and likely protects M.tuberculosis against the CAMPs produced by competiting microorganisms (bacteriocins). In fact, the modification of anionic phosphatidylglycerol with positively charged L-lysine results in repulsion of the peptides. The protein is Lysylphosphatidylglycerol biosynthesis bifunctional protein LysX (lysX) of Gordonia bronchialis (strain ATCC 25592 / DSM 43247 / BCRC 13721 / JCM 3198 / KCTC 3076 / NBRC 16047 / NCTC 10667) (Rhodococcus bronchialis).